Here is a 320-residue protein sequence, read N- to C-terminus: Malate dehydrogenase (320 aa).

NAD(+) contacts are provided by residues 10 to 15 and aspartate 34; that span reads GAGMIG. Residues arginine 83 and arginine 89 each coordinate substrate. Residues asparagine 96 and 119-121 contribute to the NAD(+) site; that span reads ITN. Residues asparagine 121 and arginine 152 each contribute to the substrate site. Histidine 176 functions as the Proton acceptor in the catalytic mechanism.

This sequence belongs to the LDH/MDH superfamily. MDH type 3 family.

It catalyses the reaction (S)-malate + NAD(+) = oxaloacetate + NADH + H(+). Functionally, catalyzes the reversible oxidation of malate to oxaloacetate. The sequence is that of Malate dehydrogenase from Caulobacter sp. (strain K31).